The following is a 367-amino-acid chain: DNA replication and repair protein RecF (367 aa).

ATP is bound at residue 30–37; the sequence is GDNAQGKT.

This sequence belongs to the RecF family.

The protein localises to the cytoplasm. The RecF protein is involved in DNA metabolism; it is required for DNA replication and normal SOS inducibility. RecF binds preferentially to single-stranded, linear DNA. It also seems to bind ATP. The sequence is that of DNA replication and repair protein RecF from Clostridium beijerinckii (strain ATCC 51743 / NCIMB 8052) (Clostridium acetobutylicum).